We begin with the raw amino-acid sequence, 74 residues long: Probable molt-inhibiting hormone (74 aa).

3 disulfide bridges follow: Cys-6/Cys-43, Cys-23/Cys-39, and Cys-26/Cys-52. Ala-74 carries the post-translational modification Alanine amide.

The protein resides in the secreted. Inhibits Y-organs where molting hormone (ecdysteroid) is secreted. A molting cycle is initiated when MIH secretion diminishes or stops. Has little or no hyperglycemic activity. In Jasus lalandii (Cape rock lobster), this protein is Probable molt-inhibiting hormone.